The following is a 355-amino-acid chain: Probable cinnamyl alcohol dehydrogenase (355 aa).

Zn(2+) is bound at residue C47. S49 is an NADP(+) binding site. 7 residues coordinate Zn(2+): H69, E70, C100, C103, C106, C114, and C162. Residues T166, 187–192 (GLGGVG), 210–215 (SSSDKK), T250, G274, and 297–299 (SFI) contribute to the NADP(+) site.

It belongs to the zinc-containing alcohol dehydrogenase family. Homodimer. It depends on Zn(2+) as a cofactor.

It carries out the reaction (E)-cinnamyl alcohol + NADP(+) = (E)-cinnamaldehyde + NADPH + H(+). The catalysed reaction is (E)-coniferol + NADP(+) = (E)-coniferaldehyde + NADPH + H(+). The enzyme catalyses (E)-sinapyl alcohol + NADP(+) = (E)-sinapaldehyde + NADPH + H(+). It catalyses the reaction (E)-4-coumaroyl alcohol + NADP(+) = (E)-4-coumaraldehyde + NADPH + H(+). It carries out the reaction (E)-caffeyl alcohol + NADP(+) = (E)-caffeyl aldehyde + NADPH + H(+). The protein operates within aromatic compound metabolism; phenylpropanoid biosynthesis. Its function is as follows. Involved in lignin biosynthesis. Catalyzes the final step specific for the production of lignin monomers. Catalyzes the NADPH-dependent reduction of coniferaldehyde, 5-hydroxyconiferaldehyde, sinapaldehyde, 4-coumaraldehyde and caffeyl aldehyde to their respective alcohols. The sequence is that of Probable cinnamyl alcohol dehydrogenase (CAD1) from Eucalyptus botryoides (Southern mahogany).